A 346-amino-acid polypeptide reads, in one-letter code: Holliday junction branch migration complex subunit RuvB (346 aa).

A large ATPase domain (RuvB-L) region spans residues 1–182; sequence MSEPARLISP…FGIPVRLSFY (182 aa). ATP is bound by residues leucine 21, arginine 22, glycine 63, lysine 66, threonine 67, threonine 68, 129–131, arginine 172, tyrosine 182, and arginine 219; that span reads EDF. Threonine 67 lines the Mg(2+) pocket. Positions 183–253 are small ATPAse domain (RuvB-S); it reads TVEELELIVR…IADEALTRLL (71 aa). Positions 256 to 346 are head domain (RuvB-H); the sequence is NVGFDQLDKR…AQFRLFQEDN (91 aa). The DNA site is built by arginine 292, arginine 311, and arginine 316.

It belongs to the RuvB family. Homohexamer. Forms an RuvA(8)-RuvB(12)-Holliday junction (HJ) complex. HJ DNA is sandwiched between 2 RuvA tetramers; dsDNA enters through RuvA and exits via RuvB. An RuvB hexamer assembles on each DNA strand where it exits the tetramer. Each RuvB hexamer is contacted by two RuvA subunits (via domain III) on 2 adjacent RuvB subunits; this complex drives branch migration. In the full resolvosome a probable DNA-RuvA(4)-RuvB(12)-RuvC(2) complex forms which resolves the HJ.

It localises to the cytoplasm. The enzyme catalyses ATP + H2O = ADP + phosphate + H(+). In terms of biological role, the RuvA-RuvB-RuvC complex processes Holliday junction (HJ) DNA during genetic recombination and DNA repair, while the RuvA-RuvB complex plays an important role in the rescue of blocked DNA replication forks via replication fork reversal (RFR). RuvA specifically binds to HJ cruciform DNA, conferring on it an open structure. The RuvB hexamer acts as an ATP-dependent pump, pulling dsDNA into and through the RuvAB complex. RuvB forms 2 homohexamers on either side of HJ DNA bound by 1 or 2 RuvA tetramers; 4 subunits per hexamer contact DNA at a time. Coordinated motions by a converter formed by DNA-disengaged RuvB subunits stimulates ATP hydrolysis and nucleotide exchange. Immobilization of the converter enables RuvB to convert the ATP-contained energy into a lever motion, pulling 2 nucleotides of DNA out of the RuvA tetramer per ATP hydrolyzed, thus driving DNA branch migration. The RuvB motors rotate together with the DNA substrate, which together with the progressing nucleotide cycle form the mechanistic basis for DNA recombination by continuous HJ branch migration. Branch migration allows RuvC to scan DNA until it finds its consensus sequence, where it cleaves and resolves cruciform DNA. The sequence is that of Holliday junction branch migration complex subunit RuvB from Rhizobium johnstonii (strain DSM 114642 / LMG 32736 / 3841) (Rhizobium leguminosarum bv. viciae).